The sequence spans 542 residues: TOM1-like protein 7 (542 aa).

Residues 29–158 (ATSELLRTPD…ELKRCGVKFP (130 aa)) enclose the VHS domain. Phosphoserine is present on Ser161. The region spanning 201–289 (EIESLSLSSL…VLARHDAIAS (89 aa)) is the GAT domain. The disordered stretch occupies residues 303–340 (RETSSSLKTCGAAALESADSESSSSSSSSESETDEVED). Low complexity predominate over residues 314 to 332 (AAALESADSESSSSSSSSE). Ser521 carries the phosphoserine modification. Positions 522-542 (FPARATGTSGAATAATVDRQP) are disordered. Residues 524 to 542 (ARATGTSGAATAATVDRQP) are compositionally biased toward low complexity.

Belongs to the TOM1 family. As to expression, preferentially expressed in flowers.

The protein resides in the membrane. Might contribute to the loading of the ESCRT machinery. This is TOM1-like protein 7 from Arabidopsis thaliana (Mouse-ear cress).